A 198-amino-acid chain; its full sequence is MICOS complex subunit Mic26 (198 aa).

The N-terminal stretch at methionine 1–alanine 23 is a signal peptide. Residue asparagine 63 is glycosylated (N-linked (GlcNAc...) asparagine). Residues proline 108–alanine 128 form a helical membrane-spanning segment.

It belongs to the apolipoprotein O/MICOS complex subunit Mic27 family. In terms of assembly, component of the mitochondrial contact site and cristae organizing system (MICOS) complex, composed of at least MICOS10/MIC10, CHCHD3/MIC19, CHCHD6/MIC25, APOOL/MIC27, IMMT/MIC60, APOO/MIC23/MIC26 and MICOS13/MIC13. This complex was also known under the names MINOS or MitOS complex. The MICOS complex associates with mitochondrial outer membrane proteins SAMM50, MTX1 and MTX2 (together described as components of the mitochondrial outer membrane sorting assembly machinery (SAM) complex) and DNAJC11, mitochondrial inner membrane protein TMEM11 and with HSPA9. The MICOS and SAM complexes together with DNAJC11 are part of a large protein complex spanning both membranes termed the mitochondrial intermembrane space bridging (MIB) complex. Interacts with IMMT/MIC60. Interacts with MICOS10/MIC10 and APOOL/MIC27.

It is found in the mitochondrion inner membrane. The protein localises to the mitochondrion. The protein resides in the endoplasmic reticulum membrane. It localises to the golgi apparatus membrane. Functionally, component of the MICOS complex, a large protein complex of the mitochondrial inner membrane that plays crucial roles in the maintenance of crista junctions, inner membrane architecture, and formation of contact sites to the outer membrane. Plays a crucial role in crista junction formation and mitochondrial function. Can induce cardiac lipotoxicity by enhancing mitochondrial respiration and fatty acid metabolism in cardiac myoblasts. Promotes cholesterol efflux from macrophage cells. Detected in HDL, LDL and VLDL. Secreted by a microsomal triglyceride transfer protein (MTTP)-dependent mechanism, probably as a VLDL-associated protein that is subsequently transferred to HDL. The protein is MICOS complex subunit Mic26 (Apoo) of Mus musculus (Mouse).